Reading from the N-terminus, the 364-residue chain is MKALILVGGFGTRLRPLTLTLPKPLVEFGNRPMILHQVESLAAAGVTDIVLAVNYRPDVMVSALKKYEEQYNVKIEFSVESEPLGTAGPLKLAEKILGKDDSPFFVLNSDVICDYPFKELAEFHKKHGDEGTIVVTKVDEPSKYGVVVHKPNHPSRIDRFVEKPVEFVGNRINAGIYIMNPSVLNRIELRPTSIEQETFPAICKDGQLHSFDLEGFWMDVGQPKDFLSGTCLYLTSLAKRNSKLLAPNSEPYVYGGNVMVDPSAKIGKNCRIGPNVVIGPNVVVGDGVRLQRCVLLENSKVKDHAWVKSTIVGWNSSVGRWARLENVTVLGDDVTIADEVYVNGGSILPHKSIKQNVDVPAIIM.

It belongs to the transferase hexapeptide repeat family.

The protein resides in the cytoplasm. It carries out the reaction alpha-D-mannose 1-phosphate + GTP + H(+) = GDP-alpha-D-mannose + diphosphate. The protein operates within nucleotide-sugar biosynthesis; GDP-alpha-D-mannose biosynthesis; GDP-alpha-D-mannose from alpha-D-mannose 1-phosphate (GTP route): step 1/1. Its function is as follows. Involved in cell wall synthesis where it is required for glycosylation. Involved in cell cycle progression through cell-size checkpoint. The sequence is that of Mannose-1-phosphate guanyltransferase (mpg1) from Aspergillus oryzae (strain ATCC 42149 / RIB 40) (Yellow koji mold).